The chain runs to 245 residues: tRNA1(Val) (adenine(37)-N6)-methyltransferase (245 aa).

The protein belongs to the methyltransferase superfamily. tRNA (adenine-N(6)-)-methyltransferase family.

The protein localises to the cytoplasm. It carries out the reaction adenosine(37) in tRNA1(Val) + S-adenosyl-L-methionine = N(6)-methyladenosine(37) in tRNA1(Val) + S-adenosyl-L-homocysteine + H(+). In terms of biological role, specifically methylates the adenine in position 37 of tRNA(1)(Val) (anticodon cmo5UAC). This Escherichia coli O6:K15:H31 (strain 536 / UPEC) protein is tRNA1(Val) (adenine(37)-N6)-methyltransferase.